The primary structure comprises 105 residues: Small ribosomal subunit protein uS10 (105 aa).

It belongs to the universal ribosomal protein uS10 family. As to quaternary structure, part of the 30S ribosomal subunit.

Its function is as follows. Involved in the binding of tRNA to the ribosomes. In Nitratidesulfovibrio vulgaris (strain DSM 19637 / Miyazaki F) (Desulfovibrio vulgaris), this protein is Small ribosomal subunit protein uS10.